A 337-amino-acid polypeptide reads, in one-letter code: Ribosomal RNA small subunit methyltransferase H (337 aa).

S-adenosyl-L-methionine contacts are provided by residues 36–38, aspartate 56, phenylalanine 82, aspartate 100, and glutamine 107; that span reads GGH. Positions 317–337 are disordered; sequence RRSGRIPNPQSPIPASQGDAR.

Belongs to the methyltransferase superfamily. RsmH family.

The protein localises to the cytoplasm. It carries out the reaction cytidine(1402) in 16S rRNA + S-adenosyl-L-methionine = N(4)-methylcytidine(1402) in 16S rRNA + S-adenosyl-L-homocysteine + H(+). Functionally, specifically methylates the N4 position of cytidine in position 1402 (C1402) of 16S rRNA. This chain is Ribosomal RNA small subunit methyltransferase H, found in Xanthomonas oryzae pv. oryzae (strain KACC10331 / KXO85).